We begin with the raw amino-acid sequence, 207 residues long: Protein GrpE (207 aa).

The interval 1 to 33 (MTDPNGPKDIPEQSAEAAEPVVSKPYIMPDDPE) is disordered.

Belongs to the GrpE family. Homodimer.

It localises to the cytoplasm. Its function is as follows. Participates actively in the response to hyperosmotic and heat shock by preventing the aggregation of stress-denatured proteins, in association with DnaK and GrpE. It is the nucleotide exchange factor for DnaK and may function as a thermosensor. Unfolded proteins bind initially to DnaJ; upon interaction with the DnaJ-bound protein, DnaK hydrolyzes its bound ATP, resulting in the formation of a stable complex. GrpE releases ADP from DnaK; ATP binding to DnaK triggers the release of the substrate protein, thus completing the reaction cycle. Several rounds of ATP-dependent interactions between DnaJ, DnaK and GrpE are required for fully efficient folding. This chain is Protein GrpE, found in Rhodopseudomonas palustris (strain BisA53).